Reading from the N-terminus, the 453-residue chain is MMQTVLAKIVADKAIWVEARKQQQPLASFQNEVQPSTRHFYDALQGARTAFILECKKASPSKGVIRDDFDPARIAAIYKHYASAISVLTDEKYFQGSFNFLPIVSQIAPQPILCKDFIIDPYQIYLARYYQADACLLMLSVLDDDQYRQLAAVAHSLEMGVLTEVSNEEEQERAIALGAKVVGINNRDLRDLSIDLNRTRELAPKLGHNVTVISESGINTYAQVRELSHFANGFLIGSALMAHDDLHAAVRRVLLGENKVCGLTRGQDAKAAYDAGAIYGGLIFVATSPRCVNVEQAQEVMAAAPLQYVGVFRNHDIADVVDKAKVLSLAAVQLHGNEEQLYIDTLREALPAHVAIWKALSVGETLPAREFQHVDKYVLDNGQGGSGQRFDWSLLNGQSLGNVLLAGGLGADNCVEAAQTGCAGLDFNSAVESQPGIKDARLLASVFQTLRAY.

The interval 1–257 (MMQTVLAKIV…AAVRRVLLGE (257 aa)) is indole-3-glycerol phosphate synthase. Residues 258–453 (NKVCGLTRGQ…ASVFQTLRAY (196 aa)) form an N-(5'-phosphoribosyl)anthranilate isomerase region.

In the N-terminal section; belongs to the TrpC family. It in the C-terminal section; belongs to the TrpF family. Monomer.

The catalysed reaction is N-(5-phospho-beta-D-ribosyl)anthranilate = 1-(2-carboxyphenylamino)-1-deoxy-D-ribulose 5-phosphate. The enzyme catalyses 1-(2-carboxyphenylamino)-1-deoxy-D-ribulose 5-phosphate + H(+) = (1S,2R)-1-C-(indol-3-yl)glycerol 3-phosphate + CO2 + H2O. It functions in the pathway amino-acid biosynthesis; L-tryptophan biosynthesis; L-tryptophan from chorismate: step 3/5. Its pathway is amino-acid biosynthesis; L-tryptophan biosynthesis; L-tryptophan from chorismate: step 4/5. Bifunctional enzyme that catalyzes two sequential steps of tryptophan biosynthetic pathway. The first reaction is catalyzed by the isomerase, coded by the TrpF domain; the second reaction is catalyzed by the synthase, coded by the TrpC domain. The polypeptide is Tryptophan biosynthesis protein TrpCF (trpC) (Escherichia coli (strain K12)).